A 115-amino-acid polypeptide reads, in one-letter code: Ribonuclease P protein component (115 aa).

This sequence belongs to the RnpA family. In terms of assembly, consists of a catalytic RNA component (M1 or rnpB) and a protein subunit.

It catalyses the reaction Endonucleolytic cleavage of RNA, removing 5'-extranucleotides from tRNA precursor.. In terms of biological role, RNaseP catalyzes the removal of the 5'-leader sequence from pre-tRNA to produce the mature 5'-terminus. It can also cleave other RNA substrates such as 4.5S RNA. The protein component plays an auxiliary but essential role in vivo by binding to the 5'-leader sequence and broadening the substrate specificity of the ribozyme. The protein is Ribonuclease P protein component of Bacillus cereus (strain 03BB102).